A 186-amino-acid polypeptide reads, in one-letter code: ATP synthase subunit delta (186 aa).

Belongs to the ATPase delta chain family. In terms of assembly, F-type ATPases have 2 components, F(1) - the catalytic core - and F(0) - the membrane proton channel. F(1) has five subunits: alpha(3), beta(3), gamma(1), delta(1), epsilon(1). CF(0) has four main subunits: a(1), b(1), b'(1) and c(10-14). The alpha and beta chains form an alternating ring which encloses part of the gamma chain. F(1) is attached to F(0) by a central stalk formed by the gamma and epsilon chains, while a peripheral stalk is formed by the delta, b and b' chains.

The protein resides in the cell inner membrane. Functionally, f(1)F(0) ATP synthase produces ATP from ADP in the presence of a proton or sodium gradient. F-type ATPases consist of two structural domains, F(1) containing the extramembraneous catalytic core and F(0) containing the membrane proton channel, linked together by a central stalk and a peripheral stalk. During catalysis, ATP synthesis in the catalytic domain of F(1) is coupled via a rotary mechanism of the central stalk subunits to proton translocation. Its function is as follows. This protein is part of the stalk that links CF(0) to CF(1). It either transmits conformational changes from CF(0) to CF(1) or is implicated in proton conduction. The sequence is that of ATP synthase subunit delta from Dinoroseobacter shibae (strain DSM 16493 / NCIMB 14021 / DFL 12).